Reading from the N-terminus, the 396-residue chain is Ribosomal RNA large subunit methyltransferase I (396 aa).

Positions 2–81 (TVSIYLAKGR…EAIDKDFFVR (80 aa)) constitute a PUA domain.

This sequence belongs to the methyltransferase superfamily. RlmI family.

The protein localises to the cytoplasm. The catalysed reaction is cytidine(1962) in 23S rRNA + S-adenosyl-L-methionine = 5-methylcytidine(1962) in 23S rRNA + S-adenosyl-L-homocysteine + H(+). In terms of biological role, specifically methylates the cytosine at position 1962 (m5C1962) of 23S rRNA. The sequence is that of Ribosomal RNA large subunit methyltransferase I from Aliivibrio fischeri (strain MJ11) (Vibrio fischeri).